Consider the following 349-residue polypeptide: DNA replication and repair protein RecF (349 aa).

ATP is bound at residue 30–37 (GKNGSGKT).

Belongs to the RecF family.

The protein resides in the cytoplasm. Its function is as follows. The RecF protein is involved in DNA metabolism; it is required for DNA replication and normal SOS inducibility. RecF binds preferentially to single-stranded, linear DNA. It also seems to bind ATP. This chain is DNA replication and repair protein RecF, found in Francisella tularensis subsp. tularensis (strain FSC 198).